Here is a 497-residue protein sequence, read N- to C-terminus: Protein DML1 (497 aa).

This sequence belongs to the misato family.

Its subcellular location is the mitochondrion. Involved in the partitioning of the mitochondrial organelle and mitochondrial DNA (mtDNA) inheritance. This is Protein DML1 (DML1) from Gibberella zeae (strain ATCC MYA-4620 / CBS 123657 / FGSC 9075 / NRRL 31084 / PH-1) (Wheat head blight fungus).